A 477-amino-acid chain; its full sequence is Argininosuccinate lyase (477 aa).

It belongs to the lyase 1 family. Argininosuccinate lyase subfamily.

The protein resides in the cytoplasm. The enzyme catalyses 2-(N(omega)-L-arginino)succinate = fumarate + L-arginine. Its pathway is amino-acid biosynthesis; L-arginine biosynthesis; L-arginine from L-ornithine and carbamoyl phosphate: step 3/3. The polypeptide is Argininosuccinate lyase (Acinetobacter baumannii (strain ACICU)).